A 470-amino-acid chain; its full sequence is Siroheme synthase 2 (470 aa).

The precorrin-2 dehydrogenase /sirohydrochlorin ferrochelatase stretch occupies residues 1-202 (MDYLPMFAKL…EDWQGAEQWL (202 aa)). NAD(+) is bound by residues 22–23 (EV) and 43–44 (PE). At S126 the chain carries Phosphoserine. The segment at 214–470 (GEVVLVGAGP…TCDLKLVSLA (257 aa)) is uroporphyrinogen-III C-methyltransferase. P223 serves as a coordination point for S-adenosyl-L-methionine. Catalysis depends on D246, which acts as the Proton acceptor. K268 (proton donor) is an active-site residue. S-adenosyl-L-methionine-binding positions include 299 to 301 (GGD), 329 to 330 (TA), M381, and G410.

This sequence in the N-terminal section; belongs to the precorrin-2 dehydrogenase / sirohydrochlorin ferrochelatase family. In the C-terminal section; belongs to the precorrin methyltransferase family.

It catalyses the reaction uroporphyrinogen III + 2 S-adenosyl-L-methionine = precorrin-2 + 2 S-adenosyl-L-homocysteine + H(+). The enzyme catalyses precorrin-2 + NAD(+) = sirohydrochlorin + NADH + 2 H(+). The catalysed reaction is siroheme + 2 H(+) = sirohydrochlorin + Fe(2+). It functions in the pathway cofactor biosynthesis; adenosylcobalamin biosynthesis; precorrin-2 from uroporphyrinogen III: step 1/1. Its pathway is cofactor biosynthesis; adenosylcobalamin biosynthesis; sirohydrochlorin from precorrin-2: step 1/1. The protein operates within porphyrin-containing compound metabolism; siroheme biosynthesis; precorrin-2 from uroporphyrinogen III: step 1/1. It participates in porphyrin-containing compound metabolism; siroheme biosynthesis; siroheme from sirohydrochlorin: step 1/1. It functions in the pathway porphyrin-containing compound metabolism; siroheme biosynthesis; sirohydrochlorin from precorrin-2: step 1/1. Its function is as follows. Multifunctional enzyme that catalyzes the SAM-dependent methylations of uroporphyrinogen III at position C-2 and C-7 to form precorrin-2 via precorrin-1. Then it catalyzes the NAD-dependent ring dehydrogenation of precorrin-2 to yield sirohydrochlorin. Finally, it catalyzes the ferrochelation of sirohydrochlorin to yield siroheme. In Aeromonas hydrophila subsp. hydrophila (strain ATCC 7966 / DSM 30187 / BCRC 13018 / CCUG 14551 / JCM 1027 / KCTC 2358 / NCIMB 9240 / NCTC 8049), this protein is Siroheme synthase 2.